The primary structure comprises 347 residues: Phosphoribosylformylglycinamidine cyclo-ligase (347 aa).

Belongs to the AIR synthase family.

The protein localises to the cytoplasm. The catalysed reaction is 2-formamido-N(1)-(5-O-phospho-beta-D-ribosyl)acetamidine + ATP = 5-amino-1-(5-phospho-beta-D-ribosyl)imidazole + ADP + phosphate + H(+). Its pathway is purine metabolism; IMP biosynthesis via de novo pathway; 5-amino-1-(5-phospho-D-ribosyl)imidazole from N(2)-formyl-N(1)-(5-phospho-D-ribosyl)glycinamide: step 2/2. This is Phosphoribosylformylglycinamidine cyclo-ligase from Hydrogenovibrio crunogenus (strain DSM 25203 / XCL-2) (Thiomicrospira crunogena).